Reading from the N-terminus, the 171-residue chain is UPF0316 protein EAT1b_0871 (171 aa).

3 helical membrane-spanning segments follow: residues 4–24, 32–52, and 57–77; these read ILLI…RTIM, IAGL…GIVF, and TVGM…GGFV.

This sequence belongs to the UPF0316 family.

It localises to the cell membrane. This Exiguobacterium sp. (strain ATCC BAA-1283 / AT1b) protein is UPF0316 protein EAT1b_0871.